We begin with the raw amino-acid sequence, 496 residues long: Coiled-coil domain-containing protein 77 (496 aa).

Residues 1–42 (MDFSPPHGLRGGRSPSLQDTTISSSHTQKNGGDSTPLPPINE) are disordered. A compositionally biased stretch (polar residues) spans 15-33 (PSLQDTTISSSHTQKNGGD). Residues 51-113 (RELLEYYRKK…KALSDMQVYL (63 aa)) adopt a coiled-coil conformation. The tract at residues 170–208 (QRTVQSGDPFDRKVQRSGRAGVKQVPLKAPGKQDRTKAA) is disordered. The stretch at 214–495 (QILLLQVEAL…IYGLENELRI (282 aa)) forms a coiled coil.

This is Coiled-coil domain-containing protein 77 (ccdc77) from Xenopus laevis (African clawed frog).